Consider the following 373-residue polypeptide: Anhydro-N-acetylmuramic acid kinase (373 aa).

Position 12–19 (12–19 (GTSLDGVD)) interacts with ATP.

The protein belongs to the anhydro-N-acetylmuramic acid kinase family.

It catalyses the reaction 1,6-anhydro-N-acetyl-beta-muramate + ATP + H2O = N-acetyl-D-muramate 6-phosphate + ADP + H(+). The protein operates within amino-sugar metabolism; 1,6-anhydro-N-acetylmuramate degradation. Its pathway is cell wall biogenesis; peptidoglycan recycling. Its function is as follows. Catalyzes the specific phosphorylation of 1,6-anhydro-N-acetylmuramic acid (anhMurNAc) with the simultaneous cleavage of the 1,6-anhydro ring, generating MurNAc-6-P. Is required for the utilization of anhMurNAc either imported from the medium or derived from its own cell wall murein, and thus plays a role in cell wall recycling. The chain is Anhydro-N-acetylmuramic acid kinase from Salmonella paratyphi A (strain ATCC 9150 / SARB42).